We begin with the raw amino-acid sequence, 490 residues long: MDKVTDNSPDVESTESTEGSFPTVGVDTGDTITATLATGTENVGGGGGAFGGASESSAAIHATAKWSTAQLKKHQAEQAARAAAAEAALAKAKSQRDALTQRLKDIVNDALRANAARSPSVTDLAHANNMAMQAEAERLRLAKAEQKAREEAEAAEKALREAERQRDEIARQQAETAHLLAMAEAAEAEKNRQDSLDEEHRAVEVAEKKLAEAKAELAKAESDVQSKQAIVSRVAGELENAQKSVDVKVTGFPGWRDVQKKLERQLQDKKNEYSSVTNALNSAVSIRDAKKTEVQNAEIKLKEAKDALEKSQVKDSVDTMVGFYQYITEQYGEKYSRIAQDLAEKAKGSKFNSVDEALAAFEKYKNVLDKKFSKVDRDDIFNALESITYDEWAKHLEKISRALKVTGYLSFGYDVWDGTLKGLKTGDWKPLFVTLEKSAVDFGVAKIVALMFSFIVGAPLGFWGIAIITGIVSSYIGDDELNKLNELLGI.

Polar residues predominate over residues 1 to 20 (MDKVTDNSPDVESTESTEGS). Disordered stretches follow at residues 1–29 (MDKV…VDTG) and 146–171 (QKAR…EIAR). Positions 146–170 (QKAREEAEAAEKALREAERQRDEIA) are enriched in basic and acidic residues. A helical transmembrane segment spans residues 447-467 (IVALMFSFIVGAPLGFWGIAI).

Belongs to the channel forming colicin family.

It is found in the host membrane. Its function is as follows. This colicin is a channel-forming colicin. This class of transmembrane toxins depolarize the cytoplasmic membrane, leading to dissipation of cellular energy. In terms of biological role, colicins are polypeptide toxins produced by and active against E.coli and closely related bacteria. In Escherichia coli, this protein is Colicin-10 (cta).